The following is a 222-amino-acid chain: Small ribosomal subunit protein uS7m (222 aa).

The protein belongs to the universal ribosomal protein uS7 family. Part of the small ribosomal subunit.

The protein localises to the mitochondrion. Functionally, one of the primary rRNA binding proteins, it binds directly to 18S rRNA where it nucleates assembly of the head domain of the small subunit. This chain is Small ribosomal subunit protein uS7m (RPS7), found in Prototheca wickerhamii.